The following is a 388-amino-acid chain: Putative nickel insertion protein (388 aa).

This sequence belongs to the LarC family.

In Geobacter sulfurreducens (strain ATCC 51573 / DSM 12127 / PCA), this protein is Putative nickel insertion protein.